The following is a 387-amino-acid chain: O-methyltransferase asqD (387 aa).

Residue D252 participates in S-adenosyl-L-methionine binding. The Proton acceptor role is filled by H294.

It belongs to the class I-like SAM-binding methyltransferase superfamily. Cation-independent O-methyltransferase family.

Its pathway is secondary metabolite biosynthesis. It functions in the pathway alkaloid biosynthesis. The protein operates within mycotoxin biosynthesis. In terms of biological role, O-methyltransferase; part of the gene cluster that mediates the biosynthesis of the aspoquinolone mycotoxins. The role of asqD within the aspoquinolone pathway has still to be determined. The first step of the pathway is catalyzed by the nonribosomal peptide synthetase asqK that condenses anthranilic acid and O-methyl-L-tyrosine to produce 4'-methoxycyclopeptin. 4'-methoxycyclopeptin is then converted to 4'-methoxydehydrocyclopeptin by the ketoglutarate-dependent dioxygenase asqJ. AsqJ also converts its first product 4'-methoxydehydrocyclopeptin to 4'-methoxycyclopenin. The following conversion of 4'-methoxycyclopenin into 4'-methoxyviridicatin is catalyzed by the cyclopenase asqI. 4'-methoxyviridicatin is the precursor of quinolone natural products, and is further converted to quinolinone B. The prenyltransferase asqH1 then catalyzes the canonical Friedel-Crafts alkylation of quinolinone B with dimethylallyl cation to yield dimethylallyl quinolone, which is subjected to FAD-dependent dehydrogenation by the FAD-linked oxidoreductase asqF to yield conjugated aryl diene. The delta(3') double bond then serves as the site of the second alkylation with DMAPP catalyzed by the prenyltransferase asqH2 to yield a carbenium ion intermediate, which can be attacked by H(2)O to yield a styrenyl quinolone containing a C3'-hydroxyprenyl chain. The FAD-dependent monooxygenase asqG performs epoxidation of the terminal C7'-C8' olefin. Finally, after dehydratation of the epoxide at C3 by asqC, the quinolone epoxide rearrangement protein asqO catalyzes an enzymatic 3-exo-tet cyclization to yield the cyclopropyl-THF ring system in aspoquinolone. This is O-methyltransferase asqD from Emericella nidulans (strain FGSC A4 / ATCC 38163 / CBS 112.46 / NRRL 194 / M139) (Aspergillus nidulans).